We begin with the raw amino-acid sequence, 152 residues long: UPF0178 protein Shewmr7_1635 (152 aa).

It belongs to the UPF0178 family.

The polypeptide is UPF0178 protein Shewmr7_1635 (Shewanella sp. (strain MR-7)).